The sequence spans 409 residues: MAREKFERTKPHVNIGTIGHVDHGKTTLTAAITATLALDGGAQAKAYADIDGAPEERARGITINTAHVEYETKDRHYAHVDCPGHADYVKNMITGAAQMDGAILVVSAADGPMPQTREHILLSKQVGVPNIVVFLNKEDQVDDEELLELVELEVRELLSAYDFPGDDIPICPGSALQAIEAITANPTVKRGDNKWVDKIYALMDAVDEYIPTPERDVEKTFLMAIEDVFSITGRGTVATGRIERGVVKVGENVEIVGVTDTQTTTITGIEMFQKTLEEGFAGDNVGILLRGVTRENIERGMVLAKPGTITPHTSFESEVYVLTKDEGGRHTPFFTGYRPQFYVRTTDVTGSITQFTADDGSVVEMVMPGDRIKMTAEFIYPVAIEAGMRFAIREGGRTIGAGVVSKIVK.

The region spanning 10–214 is the tr-type G domain; it reads KPHVNIGTIG…AVDEYIPTPE (205 aa). The tract at residues 19-26 is G1; the sequence is GHVDHGKT. Residue 19–26 participates in GTP binding; sequence GHVDHGKT. Position 26 (T26) interacts with Mg(2+). The G2 stretch occupies residues 60–64; sequence GITIN. The interval 81-84 is G3; it reads DCPG. GTP-binding positions include 81 to 85 and 136 to 139; these read DCPGH and NKED. The interval 136–139 is G4; the sequence is NKED. Positions 174-176 are G5; that stretch reads SAL.

This sequence belongs to the TRAFAC class translation factor GTPase superfamily. Classic translation factor GTPase family. EF-Tu/EF-1A subfamily.

The protein resides in the plastid. The protein localises to the chloroplast. The enzyme catalyses GTP + H2O = GDP + phosphate + H(+). Functionally, GTP hydrolase that promotes the GTP-dependent binding of aminoacyl-tRNA to the A-site of ribosomes during protein biosynthesis. The protein is Elongation factor Tu, chloroplastic (tufA) of Phaeodactylum tricornutum (strain CCAP 1055/1).